We begin with the raw amino-acid sequence, 391 residues long: Elongation factor Tu (391 aa).

A tr-type G domain is found at 10–201 (KPHVNIGTIG…AVDAYIPTPE (192 aa)). Residues 19–26 (GHVDHGKT) are G1. Residue 19 to 26 (GHVDHGKT) coordinates GTP. Threonine 26 is a binding site for Mg(2+). The interval 55-59 (GITIS) is G2. Residues 76–79 (DCPG) form a G3 region. GTP contacts are provided by residues 76-80 (DCPGH) and 131-134 (NKVD). The interval 131–134 (NKVD) is G4. The segment at 169–171 (SAL) is G5.

It belongs to the TRAFAC class translation factor GTPase superfamily. Classic translation factor GTPase family. EF-Tu/EF-1A subfamily. In terms of assembly, monomer.

It localises to the cytoplasm. The catalysed reaction is GTP + H2O = GDP + phosphate + H(+). GTP hydrolase that promotes the GTP-dependent binding of aminoacyl-tRNA to the A-site of ribosomes during protein biosynthesis. This is Elongation factor Tu from Rhizobium meliloti (strain 1021) (Ensifer meliloti).